A 77-amino-acid polypeptide reads, in one-letter code: uncharacterized protein (77 aa).

This is an uncharacterized protein from Bos taurus (Bovine).